A 423-amino-acid chain; its full sequence is Histidine--tRNA ligase (423 aa).

This sequence belongs to the class-II aminoacyl-tRNA synthetase family. As to quaternary structure, homodimer.

The protein resides in the cytoplasm. The catalysed reaction is tRNA(His) + L-histidine + ATP = L-histidyl-tRNA(His) + AMP + diphosphate + H(+). This Halorhodospira halophila (strain DSM 244 / SL1) (Ectothiorhodospira halophila (strain DSM 244 / SL1)) protein is Histidine--tRNA ligase.